The primary structure comprises 267 residues: Putative F-box protein At1g61060 (267 aa).

Residues 15–63 (DYFDAIHVDLFTAKILSKLPVKSIAQCRCVSKLWSSQIRRPYYNMLFPI) enclose the F-box domain.

The chain is Putative F-box protein At1g61060 from Arabidopsis thaliana (Mouse-ear cress).